We begin with the raw amino-acid sequence, 178 residues long: Protein modigliani (178 aa).

As to quaternary structure, probably homodimerizes. Component of the MTV complex, composed of moi/modigliani, tea and ver/verrocchio. Interacts with ver/verrochio and tea (via C-terminus); the interactions are direct and require fully intact moi/modigliani and ver/verrocchio. The MTV complex is recruited to telomeres by the HipHop-HOAP complex, consisting of HipHop, cav/HOAP and Su(var)205/HP1 to form the terminin telomere-capping complex. Interacts with cav/HOAP and Su(var)205/HP1; the interactions are direct. Probably interacts with peo (via N-terminus and UBC domain).

Its subcellular location is the nucleus. It is found in the chromosome. The protein resides in the telomere. In terms of biological role, part of the MTV complex that associates with the HipHop-HOAP complex to form the terminin telomere-capping complex involved in telomere maintenance and prevention of telomere fusion. Potentially functions downstream of mei-41/ATR. As part of the MTV complex binds single stranded DNA in a sequence-independent manner, protecting it from degradation. This Drosophila melanogaster (Fruit fly) protein is Protein modigliani.